Here is a 653-residue protein sequence, read N- to C-terminus: Beta-galactosidase (653 aa).

Positions 1-22 (MPGVVRLLALLLVPLLLGSARG) are cleaved as a signal peptide. A propeptide spanning residues 23 to 27 (LHNAT) is cleaved from the precursor. N-linked (GlcNAc...) asparagine glycosylation is present at Asn-25. Tyr-82 is a binding site for substrate. A glycan (N-linked (GlcNAc...) asparagine) is linked at Asn-96. Positions 128 and 186 each coordinate substrate. Glu-187 serves as the catalytic Proton donor. Cys-194 and Cys-229 are joined by a disulfide. N-linked (GlcNAc...) asparagine glycosylation is present at Asn-246. Glu-267 acts as the Nucleophile in catalysis. Substrate is bound at residue Tyr-332. 3 N-linked (GlcNAc...) asparagine glycosylation sites follow: Asn-463, Asn-497, and Asn-554. Residues Cys-625 and Cys-633 are joined by a disulfide bond.

The protein belongs to the glycosyl hydrolase 35 family. Homodimer. May form higher multimers.

It is found in the lysosome. It carries out the reaction Hydrolysis of terminal non-reducing beta-D-galactose residues in beta-D-galactosides.. Its function is as follows. Cleaves beta-linked terminal galactosyl residues from gangliosides, glycoproteins, and glycosaminoglycans. The sequence is that of Beta-galactosidase (GLB1) from Bos taurus (Bovine).